The sequence spans 79 residues: Cyclin-dependent kinases regulatory subunit 1 (79 aa).

An N-acetylserine modification is found at S2.

Belongs to the CKS family. Forms a homohexamer that can probably bind six kinase subunits.

Its function is as follows. Binds to the catalytic subunit of the cyclin dependent kinases and is essential for their biological function. This Bos taurus (Bovine) protein is Cyclin-dependent kinases regulatory subunit 1 (CKS1B).